The primary structure comprises 261 residues: Calbindin (261 aa).

Ala2 carries the post-translational modification N-acetylalanine. The interval 2–7 (AESHLQ) is interaction with RANBP9. 5 consecutive EF-hand domains span residues 11 to 46 (ITASQFFEIWLHFDADGSGYLEGKELQNLIQELLQA), 53 to 88 (ELSPEMKTFVDQYGQRDDGKIGIVELAHVLPTEENF), 98 to 133 (KSCEEFMKTWRKYDTDHSGFIETEELKNFLKDLLEK), 142 to 177 (KLAEYTDLMLKLFDSNNDGKLELTEMARLLPVQENF), and 186 to 221 (MCGKEFNKAFELYDQDGNGYIDENELDALLKDLCEK). Asp24, Asp26, Ser28, Tyr30, and Glu35 together coordinate Ca(2+). Ca(2+)-binding residues include Asp111, Asp113, Ser115, Glu122, Asp155, Asn157, Asp159, Lys161, Glu166, Asp199, Asp201, Asn203, Tyr205, and Glu210.

It belongs to the calbindin family. In terms of assembly, interacts with RANBP9.

Buffers cytosolic calcium. May stimulate a membrane Ca(2+)-ATPase and a 3',5'-cyclic nucleotide phosphodiesterase. The chain is Calbindin (Calb1) from Rattus norvegicus (Rat).